The sequence spans 1244 residues: MAVAVAAAGVLMGSEPGPAEELAKLEYLSLVSKVCTELDNHLGINDKDLAEFVISLAEKNTTFDTFKASLVKNGAEFTDSLISNLLRLIQTMRPPAKPSTSKDPVVKPKTEKEKLRELFPVLCQPDNPSARTMLDEEDVKVAVDVLKELEALMPSAAGQEKQRDPEHRDRTKKKKRSRSRDRDRDRDRDRDRDRDRDRDRDKDRERDRDRERDRERDRERDHKRRHRSRSRSHSRTRERTKGKSRYRSRSRSQSPFKDRKDREKYGERNLDRWRDKHVDRPPPEEPAIGDIYNGKVTSIMQFGCFVQLEGLRKRWEGLVHISELRREGRVANVADVVSKGQRVKVKVLSFTGTKTSLSMKDVDQETGEDLNPNRRRNLVGETNEETSMRNPDRPTHLSLVSAPEVEDDSLERKRLTRISDPEKWEIKQMIAANVLSKEEFPDFDEETGILPKVDDEEDEDLEIELVEEEPPFLRGHTKQSMDMSPIKIVKNPDGSLSQAAMMQSALAKERRELKQAQREAEMDSIPMGLNKHWVDPLPDAEGRQIAANMRGIGMMPNDIPEWKKHAFGGNKASYGKKTQMSILEQRESLPIYKLKEQLVQAVHDNQILIVIGETGSGKTTQITQYLAEAGYTSRGKIGCTQPRRVAAMSVAKRVSEEFGCCLGQEVGYTIRFEDCTSPETVIKYMTDGMLLRECLIDPDLTQYAIIMLDEAHERTIHTDVLFGLLKKTVQKRQDMKLIVTSATLDAVKFSQYFYEAPIFTIPGRTYPVEILYTKEPETDYLDASLITVMQIHLTEPPGDILVFLTGQEEIDTACEILYERMKSLGPDVPELIILPVYSALPSEMQTRIFDPAPPGSRKVVIATNIAETSLTIDGIYYVVDPGFVKQKVYNSKTGIDQLVVTPISQAQAKQRAGRAGRTGPGKCYRLYTERAYRDEMLTTNVPEIQRTNLASTVLSLKAMGINDLLSFDFMDAPPMETLITAMEQLYTLGALDDEGLLTRLGRRMAEFPLEPMLCKMLIMSVHLGCSEEMLTIVSMLSVQNVFYRPKDKQALADQKKAKFHQTEGDHLTLLAVYNSWKNNKFSNPWCYENFIQARSLRRAQDIRKQMLGIMDRHKLDVVSCGKSTVRVQKAICSGFFRNAAKKDPQEGYRTLIDQQVVYIHPSSALFNRQPEWVVYHELVLTTKEYMREVTTIDPRWLVEFAPAFFKVSDPTKLSKQKKQQRLEPLYNRYEEPNAWRISRAFRRR.

Lys-140 is covalently cross-linked (Glycyl lysine isopeptide (Lys-Gly) (interchain with G-Cter in SUMO2)). 2 disordered regions span residues 152–289 and 361–396; these read LMPS…PAIG and DVDQETGEDLNPNRRRNLVGETNEETSMRNPDRPTH. The span at 160–169 shows a compositional bias: basic and acidic residues; that stretch reads EKQRDPEHRD. Over residues 170–179 the composition is skewed to basic residues; that stretch reads RTKKKKRSRS. Over residues 180–220 the composition is skewed to basic and acidic residues; the sequence is RDRDRDRDRDRDRDRDRDRDRDKDRERDRDRERDRERDRER. The segment covering 221–234 has biased composition (basic residues); it reads DHKRRHRSRSRSHS. The span at 256-283 shows a compositional bias: basic and acidic residues; the sequence is FKDRKDREKYGERNLDRWRDKHVDRPPP. One can recognise an S1 motif domain in the interval 289-360; sequence GDIYNGKVTS…TGTKTSLSMK (72 aa). Positions 386 to 395 are enriched in basic and acidic residues; it reads TSMRNPDRPT. Ser-419 is subject to Phosphoserine. A Glycyl lysine isopeptide (Lys-Gly) (interchain with G-Cter in SUMO2) cross-link involves residue Lys-423. At Ser-484 the chain carries Phosphoserine. Residues 599–762 form the Helicase ATP-binding domain; that stretch reads VQAVHDNQIL…FYEAPIFTIP (164 aa). ATP is bound at residue 612–619; it reads GETGSGKT. The DEAH box motif lies at 709-712; it reads DEAH. A Helicase C-terminal domain is found at 780 to 960; sequence YLDASLITVM…STVLSLKAMG (181 aa).

This sequence belongs to the DEAD box helicase family. DEAH subfamily. DDX8/PRP22 sub-subfamily. In terms of assembly, identified in the spliceosome C complex. Interacts with ARRB2; the interaction is detected in the nucleus upon OR1D2 stimulation. Interacts with SRRM2. Interacts with CACTIN.

It localises to the nucleus. The catalysed reaction is ATP + H2O = ADP + phosphate + H(+). In terms of biological role, involved in pre-mRNA splicing as component of the spliceosome. Facilitates nuclear export of spliced mRNA by releasing the RNA from the spliceosome. This chain is ATP-dependent RNA helicase DHX8 (Dhx8), found in Mus musculus (Mouse).